The chain runs to 417 residues: Gamma-glutamyl phosphate reductase (417 aa).

This sequence belongs to the gamma-glutamyl phosphate reductase family.

The protein localises to the cytoplasm. The enzyme catalyses L-glutamate 5-semialdehyde + phosphate + NADP(+) = L-glutamyl 5-phosphate + NADPH + H(+). Its pathway is amino-acid biosynthesis; L-proline biosynthesis; L-glutamate 5-semialdehyde from L-glutamate: step 2/2. Catalyzes the NADPH-dependent reduction of L-glutamate 5-phosphate into L-glutamate 5-semialdehyde and phosphate. The product spontaneously undergoes cyclization to form 1-pyrroline-5-carboxylate. The sequence is that of Gamma-glutamyl phosphate reductase from Escherichia coli O45:K1 (strain S88 / ExPEC).